We begin with the raw amino-acid sequence, 474 residues long: AAA-ATPase At3g28610 (474 aa).

The N-terminal stretch at 1–25 (MMGNMFGSSLASLFFLWATIQQIFP) is a signal peptide. Position 244 to 251 (244 to 251 (GPPGTGKS)) interacts with ATP.

It belongs to the AAA ATPase family. BCS1 subfamily. The cofactor is Mg(2+).

It catalyses the reaction ATP + H2O = ADP + phosphate + H(+). This is AAA-ATPase At3g28610 from Arabidopsis thaliana (Mouse-ear cress).